The primary structure comprises 1553 residues: Sodium channel protein PaFPC1 (1553 aa).

Positions 1-68 (MADNSPLIRE…SAHPDQALEQ (68 aa)) are disordered. At 1–140 (MADNSPLIRE…RVAISTMVQP (140 aa)) the chain is on the cytoplasmic side. Residues 34–60 (ENGKTEENKDNSRDKGRGANKDRDGSA) show a composition bias toward basic and acidic residues. A helical membrane pass occupies residues 141 to 159 (IFSYFIMITILIHCIFMIM). Over 160 to 165 (PATQTT) the chain is Extracellular. Residues 166–186 (YILELVFLSIYTIEVVVKVLA) form a helical membrane-spanning segment. The Cytoplasmic segment spans residues 187–200 (RGFILHPFAYLRDP). Residues 201 to 218 (WNWLDFLVTLIGYITLVV) form a helical membrane-spanning segment. The Extracellular portion of the chain corresponds to 219–224 (DLGHLY). The helical transmembrane segment at 225–241 (ALRAFRVLRSWRTVTIV) threads the bilayer. Residues 242–260 (PGWRTIVDALSLSITSLKD) lie on the Cytoplasmic side of the membrane. Residues 261-280 (LVLLLLFSLFVFAVLGLQIY) traverse the membrane as a helical segment. Residues 281–360 (MGVLTQKCVK…PNYGYTSFDT (80 aa)) lie on the Extracellular side of the membrane. 2 cysteine pairs are disulfide-bonded: Cys288-Cys337 and Cys328-Cys343. N-linked (GlcNAc...) asparagine glycosylation is found at Asn300, Asn308, Asn312, and Asn330. The pore-forming intramembrane region spans 361–385 (FGWAFLSVFRLVTLDYWEDLYQLAL). Glu378 is a binding site for saxitoxin. Over 386–392 (RSAGPWH) the chain is Extracellular. Residues 393 to 413 (ILFFIIVVFYGTFCFLNFILA) traverse the membrane as a helical segment. At 414–519 (VVVMSYTHMV…GAIGAVVLSP (106 aa)) the chain is on the cytoplasmic side. The helical transmembrane segment at 520 to 538 (FFELFIAVIIVLNITFMAL) threads the bilayer. Topologically, residues 539–549 (DHHDMNIEFER) are extracellular. The chain crosses the membrane as a helical span at residues 550 to 569 (ILRTGNYIFTSIYIVEAVLK). Over 570–583 (IIALSPKFYFKDSW) the chain is Cytoplasmic. The helical transmembrane segment at 584 to 603 (NVFDFIIVVFAILELGLEGV) threads the bilayer. The Extracellular segment spans residues 604 to 605 (QG). Residues 606 to 623 (LSVFRSFRLLRVFRLAKF) traverse the membrane as a helical segment. At 624 to 639 (WPTLNNFMSVMTKSYG) the chain is on the cytoplasmic side. Residues 640 to 658 (AFVNVMYVMFLLLFIFAII) form a helical membrane-spanning segment. The Extracellular portion of the chain corresponds to 659–686 (GMQLFGMNYIDNMERFPDGDLPRWNFTD). The N-linked (GlcNAc...) asparagine glycan is linked to Asn683. The segment at residues 687–707 (FLHSFMIVFRALCGEWIESMW) is an intramembrane region (pore-forming). 2 residues coordinate tetrodotoxin: Glu701 and Glu704. Glu704 contributes to the saxitoxin binding site. At 708–719 (DCMLVGDWSCIP) the chain is on the extracellular side. Cys709 and Cys717 form a disulfide bridge. Residues 720 to 740 (FFVAVFFVGNLVILNLLIALL) traverse the membrane as a helical segment. Residues 741-857 (LNNYGSFCTS…VCFLLAKNKY (117 aa)) lie on the Cytoplasmic side of the membrane. A helical membrane pass occupies residues 858–875 (FQKFVTAVLVITSVLLAL). Residues 876-888 (EDIYLPQRPVLVN) are Extracellular-facing. A helical membrane pass occupies residues 889 to 907 (ITLYVDYVLTAFFVIEMII). The Cytoplasmic portion of the chain corresponds to 908–921 (MLFAVGFKKYFTSK). A helical membrane pass occupies residues 922-940 (WYWLDFIVVVAYLLNFVLM). Topologically, residues 941–945 (CAGIE) are extracellular. The helical transmembrane segment at 946–964 (ALQTLRLLRVFRLFRPLSK) threads the bilayer. The Cytoplasmic portion of the chain corresponds to 965 to 981 (VNGMQVVTSTLVEAVPH). The chain crosses the membrane as a helical span at residues 982–1001 (IFNVILVGIFFWLVFAIMGV). At 1002 to 1047 (QLFAGKFYKCVDENSTVLSHEITMDRNDCLHENYTWENSPMNFDHV) the chain is on the extracellular side. The cysteines at positions 1011 and 1030 are disulfide-linked. Residue Asn1015 is glycosylated (N-linked (GlcNAc...) asparagine). N-linked (GlcNAc...) asparagine; atypical glycosylation is present at Asn1028. Asn1034 is a glycosylation site (N-linked (GlcNAc...) asparagine). The pore-forming intramembrane region spans 1048–1069 (GNAYLSLLQVATFKGWLQIMND). Gly1062 serves as a coordination point for tetrodotoxin. Position 1063 (Trp1063) interacts with saxitoxin. Residues 1070–1086 (AIDSREVHKQPIRETNI) are Extracellular-facing. Residues 1087–1108 (YMYLYFIFFIVFGSFFILKLFV) form a helical membrane-spanning segment. The Cytoplasmic portion of the chain corresponds to 1109–1171 (CILIDIFRQQ…LMYDISVNRK (63 aa)). The interval 1133-1146 (QLIYRRAVMRTMSA) is linker region that may regulate channel inactivation. The helical transmembrane segment at 1172–1189 (FEYTMMILIILNVAVMAI) threads the bilayer. Topologically, residues 1190-1200 (DHYGQSMEFSE) are extracellular. A helical transmembrane segment spans residues 1201-1219 (VLDYLNLIFIIIFFVECVI). The Cytoplasmic portion of the chain corresponds to 1220 to 1231 (KVSGLRHHYFKD). The helical transmembrane segment at 1232 to 1249 (PWNIIDFLYVVLAIAGLM) threads the bilayer. At 1250–1262 (LSDVIEKYFISPT) the chain is on the extracellular side. Residues 1263–1279 (LLRILRILRVGRLLRYF) traverse the membrane as a helical segment. Residues 1280–1298 (QSARGMRLLLLALRKALRT) are Cytoplasmic-facing. The helical transmembrane segment at 1299 to 1316 (LFNVSFLLFVIMFVYAVF) threads the bilayer. Topologically, residues 1317-1338 (GMEFFMHIRDAGAIDDVYNFKT) are extracellular. The pore-forming intramembrane region spans 1339–1361 (FGQSIILLFQLATSAGWDGVYFA). Tetrodotoxin-binding residues include Gly1354 and Asp1356. Asp1356 is a saxitoxin binding site. The Extracellular portion of the chain corresponds to 1362 to 1387 (IANEEDCRAPDHELGYPGNCGSRALG). The cysteines at positions 1368 and 1381 are disulfide-linked. Residues 1388–1410 (IAYLVSYLIITCLVVINMYAAVI) traverse the membrane as a helical segment. Over 1411–1553 (LDYVLEVYED…NAWRKHKQQN (143 aa)) the chain is Cytoplasmic.

Belongs to the sodium channel (TC 1.A.1.10) family. In terms of tissue distribution, detected in adult nerve cord, muscle, gut and mushroom-shaped accessory glands.

It localises to the cell membrane. Inhibited by the pore blockers saxitoxin and tetrodotoxin. Its function is as follows. Mediates the voltage-dependent sodium ion permeability of excitable membranes. In Periplaneta americana (American cockroach), this protein is Sodium channel protein PaFPC1.